A 243-amino-acid chain; its full sequence is Complement C1q tumor necrosis factor-related protein 5 (243 aa).

The signal sequence occupies residues 1–15 (MRPLLALLLLGLASG). A disordered region spans residues 15–124 (GSPPLDDNKI…VPPPADTPLP (110 aa)). The region spanning 30-95 (GQPGLPGTPG…AGPVGAIGPA (66 aa)) is the Collagen-like domain. A C1q domain is found at 99–238 (SVPPRSAFSA…GFLVYSDWHS (140 aa)).

Homotrimer (via collagen-like domain). May form higher order oligomers by supercoiling of the trimers. May interact with ERFE.

The protein resides in the secreted. The protein is Complement C1q tumor necrosis factor-related protein 5 (C1qtnf5) of Rattus norvegicus (Rat).